The following is a 635-amino-acid chain: Probable extracellular metalloproteinase 1 (635 aa).

The signal sequence occupies residues 1–19 (MHGLLLAAGLLSLPLHVLA). The propeptide occupies 20–246 (HPQPSTSTSL…VHNVVDYVAH (227 aa)). Asparagine 287 carries an N-linked (GlcNAc...) asparagine glycan. Histidine 430 contacts Zn(2+). Glutamate 431 is an active-site residue. Histidine 434 serves as a coordination point for Zn(2+). 3 N-linked (GlcNAc...) asparagine glycosylation sites follow: asparagine 475, asparagine 594, and asparagine 623.

The protein belongs to the peptidase M36 family. Zn(2+) is required as a cofactor.

Its subcellular location is the secreted. In terms of biological role, secreted metalloproteinase probably acting as a virulence factor. The sequence is that of Probable extracellular metalloproteinase 1 (MEP1) from Arthroderma benhamiae (strain ATCC MYA-4681 / CBS 112371) (Trichophyton mentagrophytes).